The primary structure comprises 499 residues: Lysine--tRNA ligase (499 aa).

Mg(2+) contacts are provided by E408 and E415.

The protein belongs to the class-II aminoacyl-tRNA synthetase family. In terms of assembly, homodimer. Requires Mg(2+) as cofactor.

It localises to the cytoplasm. The enzyme catalyses tRNA(Lys) + L-lysine + ATP = L-lysyl-tRNA(Lys) + AMP + diphosphate. This Bacillus cereus (strain AH820) protein is Lysine--tRNA ligase.